Reading from the N-terminus, the 167-residue chain is Small ribosomal subunit protein uS5 (167 aa).

The region spanning 12-75 (LQEKLVAVNR…EKARRNIVSV (64 aa)) is the S5 DRBM domain.

This sequence belongs to the universal ribosomal protein uS5 family. Part of the 30S ribosomal subunit. Contacts proteins S4 and S8.

In terms of biological role, with S4 and S12 plays an important role in translational accuracy. Functionally, located at the back of the 30S subunit body where it stabilizes the conformation of the head with respect to the body. The polypeptide is Small ribosomal subunit protein uS5 (Shewanella loihica (strain ATCC BAA-1088 / PV-4)).